The following is a 71-amino-acid chain: Small ribosomal subunit protein bS21 (71 aa).

A disordered region spans residues 40 to 71; that stretch reads KPTQVRKRKQAAAVKRHMKRLNREQQRRQRPY. A compositionally biased stretch (basic residues) spans 43–59; it reads QVRKRKQAAAVKRHMKR. Positions 60–71 are enriched in basic and acidic residues; the sequence is LNREQQRRQRPY.

This sequence belongs to the bacterial ribosomal protein bS21 family.

The sequence is that of Small ribosomal subunit protein bS21 from Halorhodospira halophila (strain DSM 244 / SL1) (Ectothiorhodospira halophila (strain DSM 244 / SL1)).